A 131-amino-acid polypeptide reads, in one-letter code: Small ribosomal subunit protein uS8 (131 aa).

The protein belongs to the universal ribosomal protein uS8 family. Part of the 30S ribosomal subunit. Contacts proteins S5 and S12.

In terms of biological role, one of the primary rRNA binding proteins, it binds directly to 16S rRNA central domain where it helps coordinate assembly of the platform of the 30S subunit. The sequence is that of Small ribosomal subunit protein uS8 from Halorhodospira halophila (strain DSM 244 / SL1) (Ectothiorhodospira halophila (strain DSM 244 / SL1)).